The chain runs to 204 residues: Auxin-binding protein 4 (204 aa).

The signal sequence occupies residues 1-41 (MVRRRPATGAAPRPHLAAVGRGLLLASVLAAAASSLPVAES). A disulfide bond links Cys-43 and Cys-196. Residues His-98, His-100, and Glu-104 each contribute to the Zn(2+) site. An N-linked (GlcNAc...) asparagine glycan is attached at Asn-136. His-147 contacts Zn(2+). The Prevents secretion from ER motif lies at 201–204 (KDEL).

As to quaternary structure, homodimer.

It localises to the endoplasmic reticulum lumen. This is probably a receptor for the plant hormone auxin. This Zea mays (Maize) protein is Auxin-binding protein 4 (ABP4).